The chain runs to 91 residues: Gas vesicle protein K (91 aa).

This sequence belongs to the gas vesicle GvpK family.

The protein resides in the gas vesicle. Functionally, might be involved in nucleating gas vesicle formation. Gas vesicles are hollow, gas filled proteinaceous nanostructures found in some microorganisms. It is not clear what function gas vesicles perform in soil bacteria. The sequence is that of Gas vesicle protein K from Streptomyces sp. (strain CB03234).